The following is a 102-amino-acid chain: uncharacterized protein (102 aa).

2 helical membrane passes run 38-58 and 64-84; these read FYVW…QLIL and VLFL…LFQF.

The protein resides in the membrane. This is an uncharacterized protein from Saccharomyces cerevisiae (strain ATCC 204508 / S288c) (Baker's yeast).